Reading from the N-terminus, the 231-residue chain is MAKKGKKYLDAASKVDRNEHYSVEDAISLAKETSVANFDATVEVAFRLVIDTRKNDQQIRGAVVLPHGTGKTQRVLVFAKGDKASEAEAAGADYVGESEYATKIQQGWFDFDVVVATPDMMGEVGKLGRVLGPKGLMPNPKTGTVTMDVKKAVEEIKAGKVEYRAEKAGIIHASIGKVSFSTEDLVENFNTLQDVIAKAKPASAKGTYFKSVAVTTTMGPGVKVDTSNFKL.

Belongs to the universal ribosomal protein uL1 family. As to quaternary structure, part of the 50S ribosomal subunit.

In terms of biological role, binds directly to 23S rRNA. The L1 stalk is quite mobile in the ribosome, and is involved in E site tRNA release. Protein L1 is also a translational repressor protein, it controls the translation of the L11 operon by binding to its mRNA. This Staphylococcus carnosus (strain TM300) protein is Large ribosomal subunit protein uL1.